Here is a 606-residue protein sequence, read N- to C-terminus: Scavenger receptor class A member 3 (606 aa).

Residues 1-56 (MKVRSAGSDRDVLCVTEEDLAGEDEDMPSFPCTQEGRAGPRCNRCQKNLSLHTSVR) lie on the Cytoplasmic side of the membrane. The helical; Signal-anchor for type II membrane protein transmembrane segment at 57-77 (ILYLFLTLLLVAVAVLASLVF) threads the bilayer. The Extracellular portion of the chain corresponds to 78–606 (RKVDSLSEDI…PGPPGNQSPY (529 aa)). 10 N-linked (GlcNAc...) asparagine glycosylation sites follow: N115, N182, N224, N257, N313, N337, N365, N400, N430, and N451. Positions 455 to 606 (IRGVPGPPGP…PGPPGNQSPY (152 aa)) are disordered. 2 Collagen-like domains span residues 456-558 (RGVP…PGPS) and 559-601 (GPQG…GPPG). Positions 497–516 (PQGQPGEPGPVGERGPAGPR) are enriched in low complexity. Residues 526–535 (GSFGTGGPRG) show a composition bias toward gly residues. 2 stretches are compositionally biased toward pro residues: residues 548–558 (PEGPPGSPGPS) and 591–606 (PGLPGPPGPPGNQSPY).

The protein localises to the endoplasmic reticulum membrane. It localises to the golgi apparatus membrane. Its function is as follows. Seems to protect cells by scavenging oxidative molecules or harmful products of oxidation. In Mus musculus (Mouse), this protein is Scavenger receptor class A member 3 (Scara3).